Reading from the N-terminus, the 400-residue chain is Formate-dependent phosphoribosylglycinamide formyltransferase (400 aa).

Residues 22 to 23 (EL) and glutamate 82 contribute to the N(1)-(5-phospho-beta-D-ribosyl)glycinamide site. ATP-binding positions include arginine 115, lysine 157, 162-167 (SSGKGQ), 197-200 (EGFV), and glutamate 205. An ATP-grasp domain is found at 120–315 (RLAAETLGVP…EFELHARAIL (196 aa)). Mg(2+) is bound by residues glutamate 274 and glutamate 286. Residues aspartate 293, lysine 362, and 369–370 (RR) each bind N(1)-(5-phospho-beta-D-ribosyl)glycinamide.

Belongs to the PurK/PurT family. As to quaternary structure, homodimer.

The catalysed reaction is N(1)-(5-phospho-beta-D-ribosyl)glycinamide + formate + ATP = N(2)-formyl-N(1)-(5-phospho-beta-D-ribosyl)glycinamide + ADP + phosphate + H(+). It participates in purine metabolism; IMP biosynthesis via de novo pathway; N(2)-formyl-N(1)-(5-phospho-D-ribosyl)glycinamide from N(1)-(5-phospho-D-ribosyl)glycinamide (formate route): step 1/1. In terms of biological role, involved in the de novo purine biosynthesis. Catalyzes the transfer of formate to 5-phospho-ribosyl-glycinamide (GAR), producing 5-phospho-ribosyl-N-formylglycinamide (FGAR). Formate is provided by PurU via hydrolysis of 10-formyl-tetrahydrofolate. This chain is Formate-dependent phosphoribosylglycinamide formyltransferase, found in Mycolicibacterium smegmatis (strain ATCC 700084 / mc(2)155) (Mycobacterium smegmatis).